Consider the following 379-residue polypeptide: Heterogeneous nuclear ribonucleoprotein A3 (379 aa).

Position 1 is an N-acetylmethionine (M1). A compositionally biased stretch (pro residues) spans M1–P10. Residues M1–L34 are disordered. A Glycyl lysine isopeptide (Lys-Gly) (interchain with G-Cter in SUMO2) cross-link involves residue K4. Residue S14 is modified to Phosphoserine. Residues R21–L34 show a composition bias toward basic and acidic residues. The 84-residue stretch at R35–K118 folds into the RRM 1 domain. A Glycyl lysine isopeptide (Lys-Gly) (interchain with G-Cter in SUMO2) cross-link involves residue K36. Residue S43 is modified to Phosphoserine. Residue R52 is modified to Dimethylated arginine; alternate. R52 carries the post-translational modification Omega-N-methylarginine; alternate. The residue at position 76 (R76) is an Omega-N-methylarginine. A phosphoserine mark is found at S112 and S116. Residue K118 forms a Glycyl lysine isopeptide (Lys-Gly) (interchain with G-Cter in SUMO2) linkage. T124 is modified (phosphothreonine). Positions K126 to Q205 constitute an RRM 2 domain. K134 is subject to N6-acetyllysine; alternate. Residue K134 forms a Glycyl lysine isopeptide (Lys-Gly) (interchain with G-Cter in SUMO2); alternate linkage. Residues K151 and K182 each participate in a glycyl lysine isopeptide (Lys-Gly) (interchain with G-Cter in SUMO2) cross-link. The disordered stretch occupies residues K204 to G225. Omega-N-methylarginine; alternate is present on residues R214, R216, R226, R239, and R246. An asymmetric dimethylarginine; alternate mark is found at R214, R216, R226, R239, and R246. Residues R214–G225 show a composition bias toward gly residues. R257 is modified (omega-N-methylarginine). The residue at position 286 (R286) is an Asymmetric dimethylarginine. Positions N335–F379 are disordered. The span at M347–F379 shows a compositional bias: gly residues. At S351 the chain carries Phosphoserine. R355 bears the Omega-N-methylarginine mark. S359 is subject to Phosphoserine. Phosphotyrosine is present on residues Y361 and Y365. Phosphoserine occurs at positions 367 and 371. Y374 is modified (phosphotyrosine). The residue at position 376 (S376) is a Phosphoserine.

In terms of assembly, identified in the spliceosome C complex.

It localises to the nucleus. Functionally, plays a role in cytoplasmic trafficking of RNA. Binds to the cis-acting response element, A2RE. May be involved in pre-mRNA splicing. In Mus musculus (Mouse), this protein is Heterogeneous nuclear ribonucleoprotein A3 (Hnrnpa3).